The sequence spans 144 residues: TSC22 domain family protein 1 (144 aa).

The segment at 77–98 (LKEQIKELIEKNSQLEQENNLL) is leucine-zipper. Residues 109–144 (QFQAQLQTGSPPATTQPQGTTQPPAQPASQGSGPTA) are disordered. The span at 115 to 144 (QTGSPPATTQPQGTTQPPAQPASQGSGPTA) shows a compositional bias: low complexity.

The protein belongs to the TSC-22/Dip/Bun family. In terms of assembly, forms homodimers. Forms a heterodimer with TSC22D4/THG1. Interacts with histone H1-2. Interacts with GNL3.

The protein localises to the cytoplasm. The protein resides in the nucleus. Transcriptional repressor. Plays a role in the repression of hematopoietic precursor cell growth. Promotes IL2 deprivation-induced apoptosis in T-lymphocytes, via repression of TSC22D3/GILZ transcription and activation of the caspase cascade. Positively regulates cell death in response to TGFB3 during mammary gland involution. In Bos taurus (Bovine), this protein is TSC22 domain family protein 1.